We begin with the raw amino-acid sequence, 63 residues long: uncharacterized protein (63 aa).

This is an uncharacterized protein from Escherichia coli (strain K12).